The chain runs to 688 residues: Probable glucan endo-1,3-beta-glucosidase btgC (688 aa).

Disordered stretches follow at residues 1–91, 126–148, and 168–195; these read MSGP…NLGP, ANIP…PEPP, and GQLT…IPYQ. The Cytoplasmic portion of the chain corresponds to 1–307; sequence MSGPNRTYSF…PKPGGGNKKR (307 aa). Positions 175–188 are enriched in polar residues; it reads SVSHLSSTNPSQRN. The chain crosses the membrane as a helical; Signal-anchor for type II membrane protein span at residues 308–328; the sequence is GWIVGAILAFIIIGAIVGGAV. Topologically, residues 329–688 are extracellular; the sequence is GGTIGHRGNE…IPDCGGKTAT (360 aa). The interval 334 to 363 is disordered; that stretch reads HRGNEEPSSASSASSSSTQTATEDTSVNGD. Residues 341-355 are compositionally biased toward low complexity; sequence SSASSASSSSTQTAT. Residues Asn408, Asn431, and Asn459 are each glycosylated (N-linked (GlcNAc...) asparagine). The active-site Proton donor is Glu491. Glu590 acts as the Nucleophile in catalysis. N-linked (GlcNAc...) asparagine glycans are attached at residues Asn609 and Asn635.

This sequence belongs to the glycosyl hydrolase 17 family.

It localises to the cell membrane. The enzyme catalyses Hydrolysis of (1-&gt;3)-beta-D-glucosidic linkages in (1-&gt;3)-beta-D-glucans.. Its function is as follows. Glucanases play a role in cell expansion during growth, in cell-cell fusion during mating, and in spore release during sporulation. This enzyme may be involved in beta-glucan degradation. Active on laminarin and lichenan. The polypeptide is Probable glucan endo-1,3-beta-glucosidase btgC (btgC) (Aspergillus fumigatus (strain ATCC MYA-4609 / CBS 101355 / FGSC A1100 / Af293) (Neosartorya fumigata)).